The sequence spans 141 residues: Nucleoside diphosphate kinase (141 aa).

Lys11, Phe59, Arg87, Thr93, Arg104, and Asn114 together coordinate ATP. Residue His117 is the Pros-phosphohistidine intermediate of the active site.

Belongs to the NDK family. In terms of assembly, homotetramer. Mg(2+) serves as cofactor.

The protein localises to the cytoplasm. It carries out the reaction a 2'-deoxyribonucleoside 5'-diphosphate + ATP = a 2'-deoxyribonucleoside 5'-triphosphate + ADP. The catalysed reaction is a ribonucleoside 5'-diphosphate + ATP = a ribonucleoside 5'-triphosphate + ADP. In terms of biological role, major role in the synthesis of nucleoside triphosphates other than ATP. The ATP gamma phosphate is transferred to the NDP beta phosphate via a ping-pong mechanism, using a phosphorylated active-site intermediate. The polypeptide is Nucleoside diphosphate kinase (Nitrosospira multiformis (strain ATCC 25196 / NCIMB 11849 / C 71)).